Consider the following 465-residue polypeptide: G1/S-specific cyclin CLN2 (465 aa).

This sequence belongs to the cyclin family.

In terms of biological role, essential for the control of the cell cycle at the G1/S (start) transition. Interacts with the CDC28 protein kinase to form MPF. The sequence is that of G1/S-specific cyclin CLN2 (CLN2) from Candida albicans (Yeast).